Reading from the N-terminus, the 279-residue chain is Tryptophan 2,3-dioxygenase (279 aa).

Substrate is bound by residues 48–52 (FIVIH), Y110, and R114. H237 is a heme binding site. A substrate-binding site is contributed by T251.

Belongs to the tryptophan 2,3-dioxygenase family. As to quaternary structure, homotetramer. Heme serves as cofactor.

It catalyses the reaction L-tryptophan + O2 = N-formyl-L-kynurenine. It participates in amino-acid degradation; L-tryptophan degradation via kynurenine pathway; L-kynurenine from L-tryptophan: step 1/2. Functionally, heme-dependent dioxygenase that catalyzes the oxidative cleavage of the L-tryptophan (L-Trp) pyrrole ring and converts L-tryptophan to N-formyl-L-kynurenine. Catalyzes the oxidative cleavage of the indole moiety. This Bacillus cereus (strain ZK / E33L) protein is Tryptophan 2,3-dioxygenase.